A 241-amino-acid chain; its full sequence is Octanoyltransferase (241 aa).

Residues 43–228 enclose the BPL/LPL catalytic domain; the sequence is ADTPDEIWLV…RLTANLDGSP (186 aa). Residues 83 to 90, 159 to 161, and 172 to 174 each bind substrate; these read RGGQITYH, ALG, and GVS. Cys-190 functions as the Acyl-thioester intermediate in the catalytic mechanism.

It belongs to the LipB family.

Its subcellular location is the cytoplasm. The catalysed reaction is octanoyl-[ACP] + L-lysyl-[protein] = N(6)-octanoyl-L-lysyl-[protein] + holo-[ACP] + H(+). The protein operates within protein modification; protein lipoylation via endogenous pathway; protein N(6)-(lipoyl)lysine from octanoyl-[acyl-carrier-protein]: step 1/2. Functionally, catalyzes the transfer of endogenously produced octanoic acid from octanoyl-acyl-carrier-protein onto the lipoyl domains of lipoate-dependent enzymes. Lipoyl-ACP can also act as a substrate although octanoyl-ACP is likely to be the physiological substrate. The polypeptide is Octanoyltransferase (Paraburkholderia phytofirmans (strain DSM 17436 / LMG 22146 / PsJN) (Burkholderia phytofirmans)).